The primary structure comprises 222 residues: Large ribosomal subunit protein bL20 (222 aa).

The protein belongs to the bacterial ribosomal protein bL20 family.

Its function is as follows. Binds directly to 23S ribosomal RNA and is necessary for the in vitro assembly process of the 50S ribosomal subunit. It is not involved in the protein synthesizing functions of that subunit. In Paenarthrobacter aurescens (strain TC1), this protein is Large ribosomal subunit protein bL20 (rplT).